Reading from the N-terminus, the 414-residue chain is Eukaryotic initiation factor 4A-3 (414 aa).

Residues 41–69 carry the Q motif motif; that stretch reads ESFDDMGLQENLLRGIYAYGFEKPSAIQQ. One can recognise a Helicase ATP-binding domain in the interval 72-242; it reads IVPFCKGLDV…RKFMNKPVRI (171 aa). An ATP-binding site is contributed by 85-92; it reads AQSGTGKT. Residues 190–193 carry the DEAD box motif; the sequence is DEAD. One can recognise a Helicase C-terminal domain in the interval 253-414; the sequence is GIKQFYVNVE…ELPANVADLL (162 aa).

It belongs to the DEAD box helicase family. eIF4A subfamily. EIF4F is a multi-subunit complex, the composition of which varies with external and internal environmental conditions. It is composed of at least EIF4A, EIF4E and EIF4G. Interacts with DRM2 (via UBA domains).

Its subcellular location is the cytoplasm. The protein resides in the nucleus. The catalysed reaction is ATP + H2O = ADP + phosphate + H(+). Its function is as follows. ATP-dependent RNA helicase which is a subunit of the eIF4F complex involved in cap recognition and is required for mRNA binding to ribosome. In the current model of translation initiation, eIF4A unwinds RNA secondary structures in the 5'-UTR of mRNAs which is necessary to allow efficient binding of the small ribosomal subunit, and subsequent scanning for the initiator codon. The sequence is that of Eukaryotic initiation factor 4A-3 from Oryza sativa subsp. japonica (Rice).